The following is an 89-amino-acid chain: Small ribosomal subunit protein uS15 (89 aa).

The protein belongs to the universal ribosomal protein uS15 family. In terms of assembly, part of the 30S ribosomal subunit. Forms a bridge to the 50S subunit in the 70S ribosome, contacting the 23S rRNA.

Functionally, one of the primary rRNA binding proteins, it binds directly to 16S rRNA where it helps nucleate assembly of the platform of the 30S subunit by binding and bridging several RNA helices of the 16S rRNA. Forms an intersubunit bridge (bridge B4) with the 23S rRNA of the 50S subunit in the ribosome. In Dinoroseobacter shibae (strain DSM 16493 / NCIMB 14021 / DFL 12), this protein is Small ribosomal subunit protein uS15.